The following is a 392-amino-acid chain: ATP phosphoribosyltransferase regulatory subunit (392 aa).

Belongs to the class-II aminoacyl-tRNA synthetase family. HisZ subfamily. In terms of assembly, heteromultimer composed of HisG and HisZ subunits.

The protein resides in the cytoplasm. It functions in the pathway amino-acid biosynthesis; L-histidine biosynthesis; L-histidine from 5-phospho-alpha-D-ribose 1-diphosphate: step 1/9. Functionally, required for the first step of histidine biosynthesis. May allow the feedback regulation of ATP phosphoribosyltransferase activity by histidine. The polypeptide is ATP phosphoribosyltransferase regulatory subunit (Gloeobacter violaceus (strain ATCC 29082 / PCC 7421)).